A 150-amino-acid chain; its full sequence is Deoxyuridine 5'-triphosphate nucleotidohydrolase (150 aa).

Substrate contacts are provided by residues 69–71, N82, 86–88, and K96; these read RSG and LID.

This sequence belongs to the dUTPase family. The cofactor is Mg(2+).

The enzyme catalyses dUTP + H2O = dUMP + diphosphate + H(+). It functions in the pathway pyrimidine metabolism; dUMP biosynthesis; dUMP from dCTP (dUTP route): step 2/2. This enzyme is involved in nucleotide metabolism: it produces dUMP, the immediate precursor of thymidine nucleotides and it decreases the intracellular concentration of dUTP so that uracil cannot be incorporated into DNA. This Neisseria gonorrhoeae (strain ATCC 700825 / FA 1090) protein is Deoxyuridine 5'-triphosphate nucleotidohydrolase.